We begin with the raw amino-acid sequence, 657 residues long: Translation factor GUF1, mitochondrial (657 aa).

The N-terminal 21 residues, M1–R21, are a transit peptide targeting the mitochondrion. In terms of domain architecture, tr-type G spans E56 to T240. GTP is bound by residues A65–S72, D132–H136, and N186–D189.

Belongs to the TRAFAC class translation factor GTPase superfamily. Classic translation factor GTPase family. LepA subfamily.

It is found in the mitochondrion inner membrane. It carries out the reaction GTP + H2O = GDP + phosphate + H(+). Functionally, promotes mitochondrial protein synthesis. May act as a fidelity factor of the translation reaction, by catalyzing a one-codon backward translocation of tRNAs on improperly translocated ribosomes. Binds to mitochondrial ribosomes in a GTP-dependent manner. In Candida glabrata (strain ATCC 2001 / BCRC 20586 / JCM 3761 / NBRC 0622 / NRRL Y-65 / CBS 138) (Yeast), this protein is Translation factor GUF1, mitochondrial.